A 327-amino-acid chain; its full sequence is Ribosomal RNA small subunit methyltransferase H (327 aa).

Residues 36–38 (GGH), Asp61, Phe88, Asp114, and Gln121 each bind S-adenosyl-L-methionine.

This sequence belongs to the methyltransferase superfamily. RsmH family.

It is found in the cytoplasm. The catalysed reaction is cytidine(1402) in 16S rRNA + S-adenosyl-L-methionine = N(4)-methylcytidine(1402) in 16S rRNA + S-adenosyl-L-homocysteine + H(+). In terms of biological role, specifically methylates the N4 position of cytidine in position 1402 (C1402) of 16S rRNA. In Chlorobium luteolum (strain DSM 273 / BCRC 81028 / 2530) (Pelodictyon luteolum), this protein is Ribosomal RNA small subunit methyltransferase H.